Reading from the N-terminus, the 299-residue chain is MFENNRVRIAMQKTGRLSKDSIRLLTSCGVKINLKQQKLIAFAENMPIDVMLVRDDDIPGLVMDGVVDLGIVGENVLEEELLKRKSQKSECSYITLRRLDFGVCRLSLALPVNTIYTNITCLKNIRIATSYPHLLKKYLDEKNISFKSCMLNGSVEVAPRAGLADAICDLVSTGATLEANGLREVQVVYHSHACLICKTGNINSIKKEFINKLMTRIKGVIKARESKYIMLHAPIKQLEAVISLLHGAERPTILKLAGDDNRVAMHMVSSETLFWETMEKLKLLGASSILVLPIEKMME.

Belongs to the ATP phosphoribosyltransferase family. Long subfamily. Equilibrium between an active dimeric form, an inactive hexameric form and higher aggregates. Interconversion between the various forms is largely reversible and is influenced by the natural substrates and inhibitors of the enzyme. It depends on Mg(2+) as a cofactor.

The protein resides in the cytoplasm. It carries out the reaction 1-(5-phospho-beta-D-ribosyl)-ATP + diphosphate = 5-phospho-alpha-D-ribose 1-diphosphate + ATP. It participates in amino-acid biosynthesis; L-histidine biosynthesis; L-histidine from 5-phospho-alpha-D-ribose 1-diphosphate: step 1/9. Feedback inhibited by histidine. Functionally, catalyzes the condensation of ATP and 5-phosphoribose 1-diphosphate to form N'-(5'-phosphoribosyl)-ATP (PR-ATP). Has a crucial role in the pathway because the rate of histidine biosynthesis seems to be controlled primarily by regulation of HisG enzymatic activity. This is ATP phosphoribosyltransferase from Buchnera aphidicola subsp. Acyrthosiphon pisum (strain 5A).